A 399-amino-acid chain; its full sequence is Tyrosine--tRNA ligase (399 aa).

A 'HIGH' region motif is present at residues 42-51 (PTAPDLHLGH). Residues 226–230 (KMSKS) carry the 'KMSKS' region motif. Lys-229 contacts ATP. The S4 RNA-binding domain occupies 336–396 (MPIAAVLNKA…GKKAFARITL (61 aa)).

The protein belongs to the class-I aminoacyl-tRNA synthetase family. TyrS type 2 subfamily. As to quaternary structure, homodimer.

The protein resides in the cytoplasm. It carries out the reaction tRNA(Tyr) + L-tyrosine + ATP = L-tyrosyl-tRNA(Tyr) + AMP + diphosphate + H(+). Its function is as follows. Catalyzes the attachment of tyrosine to tRNA(Tyr) in a two-step reaction: tyrosine is first activated by ATP to form Tyr-AMP and then transferred to the acceptor end of tRNA(Tyr). The protein is Tyrosine--tRNA ligase of Pseudomonas fluorescens (strain Pf0-1).